A 1055-amino-acid polypeptide reads, in one-letter code: Leukotoxin (1055 aa).

A coiled-coil region spans residues 11–49 (QQAAQFANSVADRAKENIDAAKEQLQKALDKLGKTGKKL). Cholesterol recognition/amino acid consensus (CRAC) region stretches follow at residues 334–340 (LEEYSKR) and 502–506 (VDYLK). Hemolysin-type calcium-binding repeat units follow at residues 721–738 (IGST…NDVF), 739–756 (HGHD…DDRL), 757–774 (YGDN…NDKL), 775–792 (YGGA…NNYL), 793–810 (DGGE…SDIL), 811–828 (RGGS…DDLL), and 829–846 (DGGE…NDIY). A disordered region spans residues 795–815 (GEGDDHLEGGNGSDILRGGSG). The segment at 990–1009 (KGKSSSLMSSSRSSSMLTQK) is disordered. Low complexity predominate over residues 993–1006 (SSSLMSSSRSSSML).

This sequence belongs to the RTX prokaryotic toxin (TC 1.C.11) family. In terms of assembly, interacts specifically with the superoxide dismutase [Cu-Zn]. This interaction may protect LtxA from reactive oxygen species and reactive nitrogen species produced by host inflammatory cells during disease. Interacts with the human leukocyte adhesion glycoprotein LFA-1 (ITGAL-ITGB2). Acylated at Lys-562 and Lys-687 by LtxC. This modification is required for full activity. Isolated methyl esters contain palmitoyl and palmitolyl fatty acyl groups with smaller quantities of myristic and stearic fatty acids.

The protein resides in the cell outer membrane. It is found in the secreted. Functionally, virulence factor that plays an important role in immune evasion. Lyses human lymphocytes and monocytes. Binds to the LFA-1 integrin on the surface of the host cell and to cholesterol-containing membranes, which probably results in large LtxA-LFA-1 clusters in lipid rafts. Also shows beta-hemolytic activity on certain types of growth media. The chain is Leukotoxin from Aggregatibacter actinomycetemcomitans (Actinobacillus actinomycetemcomitans).